Consider the following 603-residue polypeptide: Protein SHORT-ROOT 2 (603 aa).

2 disordered regions span residues 11-58 (HHHH…HSHS) and 106-140 (DFSSSSSSRQFHSGTGAPSSAPVPPPPSATTSSAG). A compositionally biased stretch (low complexity) spans 31 to 44 (SYPSSRGSTSSPSS). Residues 45–58 (HHTHNHTYYHHSHS) are compositionally biased toward basic residues. Low complexity predominate over residues 108-125 (SSSSSSRQFHSGTGAPSS). A GRAS domain is found at 179 to 602 (AAPSSSGRWA…QPVVWASAWK (424 aa)). The leucine repeat I (LRI) stretch occupies residues 186-249 (RWAAQLLMEC…LTTSGPRTLR (64 aa)). The VHIID stretch occupies residues 268-354 (ALKFQELSPW…DTPHLSITTV (87 aa)). Positions 318–322 (LHILD) match the VHIID motif. A leucine repeat II (LRII) region spans residues 370–406 (EIGQRLEKFARLMGVPFSFRAVHHSGDLADLDLAALD). Positions 416–514 (LAVNCVNALR…ERAVGRAIVD (99 aa)) are PFYRE. The tract at residues 517-602 (SCPASQSAER…QPVVWASAWK (86 aa)) is SAW.

It belongs to the GRAS family. Does not interact with SCR1.

It localises to the nucleus. Its function is as follows. Putative transcription factor involved in asymmetric cell division. This chain is Protein SHORT-ROOT 2 (SHR2), found in Oryza sativa subsp. japonica (Rice).